Here is a 379-residue protein sequence, read N- to C-terminus: Cytochrome b (379 aa).

4 helical membrane-spanning segments follow: residues F33–M53, W77–V98, W113–L133, and F178–L198. The heme b site is built by H83 and H97. Residues H182 and H196 each coordinate heme b. H201 contacts a ubiquinone. The next 4 membrane-spanning stretches (helical) occupy residues T226–F246, L288–N308, V320–G340, and F347–P367.

Belongs to the cytochrome b family. The cytochrome bc1 complex contains 11 subunits: 3 respiratory subunits (MT-CYB, CYC1 and UQCRFS1), 2 core proteins (UQCRC1 and UQCRC2) and 6 low-molecular weight proteins (UQCRH/QCR6, UQCRB/QCR7, UQCRQ/QCR8, UQCR10/QCR9, UQCR11/QCR10 and a cleavage product of UQCRFS1). This cytochrome bc1 complex then forms a dimer. The cofactor is heme b.

It is found in the mitochondrion inner membrane. In terms of biological role, component of the ubiquinol-cytochrome c reductase complex (complex III or cytochrome b-c1 complex) that is part of the mitochondrial respiratory chain. The b-c1 complex mediates electron transfer from ubiquinol to cytochrome c. Contributes to the generation of a proton gradient across the mitochondrial membrane that is then used for ATP synthesis. In Akodon lutescens puer (Altiplano grass mouse), this protein is Cytochrome b (MT-CYB).